A 208-amino-acid chain; its full sequence is Uracil phosphoribosyltransferase (208 aa).

Residues Arg78, Arg103, and 130–138 (DPMLAIGGS) each bind 5-phospho-alpha-D-ribose 1-diphosphate. Residues Ile193 and 198 to 200 (GDA) each bind uracil. A 5-phospho-alpha-D-ribose 1-diphosphate-binding site is contributed by Asp199.

The protein belongs to the UPRTase family. It depends on Mg(2+) as a cofactor.

It catalyses the reaction UMP + diphosphate = 5-phospho-alpha-D-ribose 1-diphosphate + uracil. It functions in the pathway pyrimidine metabolism; UMP biosynthesis via salvage pathway; UMP from uracil: step 1/1. Allosterically activated by GTP. Catalyzes the conversion of uracil and 5-phospho-alpha-D-ribose 1-diphosphate (PRPP) to UMP and diphosphate. This Vibrio cholerae serotype O1 (strain ATCC 39315 / El Tor Inaba N16961) protein is Uracil phosphoribosyltransferase.